Reading from the N-terminus, the 111-residue chain is Cytochrome c6-like (111 aa).

Residues 1–25 (MQKFLKLVLVTFLFLISTLTPPANA) form the signal peptide. Heme c is bound by residues C39, C42, H43, and M83.

The protein belongs to the cytochrome c family. PetJ subfamily. In terms of processing, binds 1 heme c group covalently per subunit.

The protein localises to the cellular thylakoid lumen. This is Cytochrome c6-like from Nostoc sp. (strain PCC 7120 / SAG 25.82 / UTEX 2576).